The chain runs to 156 residues: Interleukin-36 receptor antagonist protein (156 aa).

Cys9 and Cys155 are disulfide-bonded.

Belongs to the IL-1 family. Interacts with cargo receptor TMED10; the interaction mediates the translocation from the cytoplasm into the ERGIC (endoplasmic reticulum-Golgi intermediate compartment) and thereby secretion. Removal of N-terminal methionine is necessary for full antagonistic activity. In terms of tissue distribution, highly abundant in embryonic tissue and tissues containing epithelial cells.

The protein localises to the cytoplasm. Its subcellular location is the secreted. In terms of biological role, inhibits the activity of interleukin-36 (IL36A,IL36B and IL36G) by binding to receptor IL1RL2/IL-36R and preventing its association with the coreceptor IL1RAP for signaling. Part of the IL-36 signaling system that is thought to be present in epithelial barriers and to take part in local inflammatory response; similar to the IL-1 system with which it shares the coreceptor. Proposed to play a role in skin inflammation. May be involved in the innate immune response to fungal pathogens. May activate an anti-inflammatory signaling pathway by recruiting SIGIRR. In Mus musculus (Mouse), this protein is Interleukin-36 receptor antagonist protein.